The following is a 329-amino-acid chain: MKVLWAALVVALLAGCWADVEPESPLEENLEPELEPKRELEQEVEPEAGWQAGQPWELALARFWDYLRWVQTLSDQVQEEVLSNQVTQELTTLMEETMKEIKAYRAELEEQLGPMASETQARVAKELQAAQARLRSDMEDVRTRLSQYRGEVQAMLGQSTEELRARFASHMRKLRKRVLRDAEDLQKRLAVYRAGVREGAERSVSTIRERLWPLLEQARTRHAKVDALATQPLRERVNALGQQLRGRLEEMGSRARSHLDEVREQMEEVQAKMEEQANQMRQQAEPFQARLKGWFEPLVEDMQRQWAVLVEKVQAAVGTSPTTPPVETK.

An N-terminal signal peptide occupies residues methionine 1–alanine 18. A run of 8 repeats spans residues threonine 92–glycine 113, proline 114–arginine 135, serine 136–glycine 157, glutamine 158–leucine 179, arginine 180–glutamate 201, arginine 202–alanine 223, lysine 224–arginine 245, and glycine 246–glutamate 267. The interval threonine 92–glutamate 267 is 8 X 22 AA approximate tandem repeats. Methionine 155 bears the Methionine sulfoxide mark. At serine 159 the chain carries Phosphoserine. The interval histidine 170–arginine 180 is LDL and other lipoprotein receptors binding. Position 174–177 (leucine 174–arginine 177) interacts with heparin. The interval histidine 222 to methionine 302 is lipid-binding and lipoprotein association. Glycine 241 to leucine 248 is a binding site for heparin. The homooligomerization stretch occupies residues asparagine 278–lysine 329. The interval arginine 290 to methionine 302 is specificity for association with VLDL.

It belongs to the apolipoprotein A1/A4/E family. In terms of assembly, homotetramer. May interact with ABCA1; functionally associated with ABCA1 in the biogenesis of HDLs. May interact with APP/A4 amyloid-beta peptide; the interaction is extremely stable in vitro but its physiological significance is unclear. May interact with MAPT. May interact with MAP2. In the cerebrospinal fluid, interacts with secreted SORL1. Interacts with PMEL; this allows the loading of PMEL luminal fragment on ILVs to induce fibril nucleation. In terms of processing, APOE exists as multiple glycosylated and sialylated glycoforms within cells and in plasma. The extent of glycosylation and sialylation are tissue and context specific. Post-translationally, glycated in plasma VLDL. Phosphorylated by FAM20C in the extracellular medium.

It is found in the secreted. The protein resides in the extracellular space. Its subcellular location is the extracellular matrix. It localises to the extracellular vesicle. The protein localises to the endosome. It is found in the multivesicular body. Its function is as follows. APOE is an apolipoprotein, a protein associating with lipid particles, that mainly functions in lipoprotein-mediated lipid transport between organs via the plasma and interstitial fluids. APOE is a core component of plasma lipoproteins and is involved in their production, conversion and clearance. Apolipoproteins are amphipathic molecules that interact both with lipids of the lipoprotein particle core and the aqueous environment of the plasma. As such, APOE associates with chylomicrons, chylomicron remnants, very low density lipoproteins (VLDL) and intermediate density lipoproteins (IDL) but shows a preferential binding to high-density lipoproteins (HDL). It also binds a wide range of cellular receptors including the LDL receptor/LDLR, the LDL receptor-related proteins LRP1, LRP2 and LRP8 and the very low-density lipoprotein receptor/VLDLR that mediate the cellular uptake of the APOE-containing lipoprotein particles. Finally, APOE also has a heparin-binding activity and binds heparan-sulfate proteoglycans on the surface of cells, a property that supports the capture and the receptor-mediated uptake of APOE-containing lipoproteins by cells. A main function of APOE is to mediate lipoprotein clearance through the uptake of chylomicrons, VLDLs, and HDLs by hepatocytes. APOE is also involved in the biosynthesis by the liver of VLDLs as well as their uptake by peripheral tissues ensuring the delivery of triglycerides and energy storage in muscle, heart and adipose tissues. By participating in the lipoprotein-mediated distribution of lipids among tissues, APOE plays a critical role in plasma and tissues lipid homeostasis. APOE is also involved in two steps of reverse cholesterol transport, the HDLs-mediated transport of cholesterol from peripheral tissues to the liver, and thereby plays an important role in cholesterol homeostasis. First, it is functionally associated with ABCA1 in the biogenesis of HDLs in tissues. Second, it is enriched in circulating HDLs and mediates their uptake by hepatocytes. APOE also plays an important role in lipid transport in the central nervous system, regulating neuron survival and sprouting. The sequence is that of Apolipoprotein E (APOE) from Arctocephalus gazella (Antarctic fur seal).